The chain runs to 343 residues: Calcium/calmodulin-dependent protein kinase type 1B (343 aa).

One can recognise a Protein kinase domain in the interval 15–270 (YEIREKLGSG…CQQALQHLWI (256 aa)). ATP contacts are provided by residues 21 to 29 (LGSGAFSEV) and K44. D136 (proton acceptor) is an active-site residue. The segment at 290 to 311 (KNFARTHWKRAFNATSFLRHIR) is calmodulin-binding. The segment at 314 to 343 (GQSPEGEEASRQCMTRHSHPGLGTSQSPKW) is disordered. The residue at position 338 (S338) is a Phosphoserine.

This sequence belongs to the protein kinase superfamily. CAMK Ser/Thr protein kinase family. CaMK subfamily. Expressed at highest levels in adult brain, and expressed in embryo. In the adult brain detected at high levels in the anterior olfactory nuclei, piriform cortex, septal nuclei, bed nuclei of the stria terminalis, hippocampal pyramidal cells, dentate granule cells, amygdala, hypothalamic nuclei, parabrachial nucleus, and nucleus of the solitary tract. Expressed at lower levels in adult ovary and heart and at very low levels in testis, lung and muscle.

The protein localises to the cytoplasm. It localises to the nucleus. The catalysed reaction is L-seryl-[protein] + ATP = O-phospho-L-seryl-[protein] + ADP + H(+). It catalyses the reaction L-threonyl-[protein] + ATP = O-phospho-L-threonyl-[protein] + ADP + H(+). Its activity is regulated as follows. Activated by Ca(2+)/calmodulin. In terms of biological role, calcium/calmodulin-dependent protein kinase belonging to a proposed calcium-triggered signaling cascade. In vitro phosphorylates CREB1 and SYN1/synapsin I. Phosphorylates and activates CAMK1. In Mus musculus (Mouse), this protein is Calcium/calmodulin-dependent protein kinase type 1B (Pnck).